A 216-amino-acid polypeptide reads, in one-letter code: Urease accessory protein UreG (216 aa).

25–32 (GPVGSGKT) contributes to the GTP binding site.

It belongs to the SIMIBI class G3E GTPase family. UreG subfamily. Homodimer. UreD, UreF and UreG form a complex that acts as a GTP-hydrolysis-dependent molecular chaperone, activating the urease apoprotein by helping to assemble the nickel containing metallocenter of UreC. The UreE protein probably delivers the nickel.

It localises to the cytoplasm. In terms of biological role, facilitates the functional incorporation of the urease nickel metallocenter. This process requires GTP hydrolysis, probably effectuated by UreG. The chain is Urease accessory protein UreG from Burkholderia mallei (strain NCTC 10247).